A 961-amino-acid chain; its full sequence is Outer capsid protein VP2 (961 aa).

This sequence belongs to the orbivirus VP2 family.

It localises to the virion. In terms of biological role, the VP2 protein is one of the two proteins (with VP5) which constitute the virus particle outer capsid. It is the major target of the host immunogenic response. Responsible for viral attachment to target host cell, probably by binding to sialic acid. This attachment induces virion internalization predominantly through clathrin-dependent endocytosis. This chain is Outer capsid protein VP2 (Segment-2), found in Bluetongue virus 1 (isolate South Africa vaccine) (BTV 1).